Here is a 161-residue protein sequence, read N- to C-terminus: Ribonuclease H (161 aa).

The RNase H type-1 domain occupies 5–149; sequence EKLAIAAATD…VDAIAVAFSK (145 aa). The Mg(2+) site is built by D14, E53, D78, and D141.

This sequence belongs to the RNase H family. In terms of assembly, monomer. Mg(2+) is required as a cofactor.

Its subcellular location is the cytoplasm. The catalysed reaction is Endonucleolytic cleavage to 5'-phosphomonoester.. Functionally, endonuclease that specifically degrades the RNA of RNA-DNA hybrids. The polypeptide is Ribonuclease H (Prochlorococcus marinus (strain NATL2A)).